Here is a 229-residue protein sequence, read N- to C-terminus: Large ribosomal subunit protein uL1c (229 aa).

This sequence belongs to the universal ribosomal protein uL1 family. Part of the 50S ribosomal subunit.

The protein localises to the plastid. The protein resides in the chloroplast. In terms of biological role, binds directly to 23S rRNA. Might be involved in E site tRNA release (Potential). The protein is Large ribosomal subunit protein uL1c (rpl1) of Porphyra purpurea (Red seaweed).